Consider the following 821-residue polypeptide: Dapper homolog 1 (821 aa).

Residues 88–136 (LNTEEKLLEENILLLRKQLNCLRRRDAGLINQLQELDRQISDLRLDTET) are a coiled coil. 4 disordered regions span residues 288-312 (SKPGEALNDEQKPEQVVGSQTSSWH), 386-432 (QDAS…STTN), 564-615 (NSAS…KTKR), and 627-655 (ERHTSSSGARSSAQRHHGHHRHHEAVLAK). Positions 388–400 (ASATSTEPSTASP) are enriched in low complexity. Residues 401-432 (QRQWSAESKGGTPQNGAYLSSSQPQNSYSTTN) show a composition bias toward polar residues. 3 stretches are compositionally biased toward basic residues: residues 584–593 (DKHRTGSRRT), 601–615 (HLHKSSKKASAKTKR), and 639–649 (AQRHHGHHRHH). The PDZ-binding motif lies at 818–821 (MTTV).

It belongs to the dapper family. As to quaternary structure, interacts with dvl2.

It localises to the cytoplasm. Its function is as follows. Involved in regulation of intracellular signaling pathways during development. Specifically thought to play a role in canonical and/or non-canonical Wnt signaling pathways through interaction with DSH (Dishevelled) family proteins. Binds to dvl2 and may regulate the degradation of ctnnb1/beta-catenin, thereby modulating the transcriptional activation of target genes of the Wnt signaling pathway. Seems to activate the canonical Wnt signaling pathway. This Danio rerio (Zebrafish) protein is Dapper homolog 1 (dact1).